Here is a 998-residue protein sequence, read N- to C-terminus: Antigenic heat-stable 120 kDa protein (998 aa).

Residues 1-69 are disordered; that stretch reads GGFMSQDHTG…LSGTISTDDQ (69 aa). Residues 12 to 21 show a composition bias toward acidic residues; it reads ENDEGYESDI. Positions 46–68 are enriched in polar residues; it reads TPASSTQSTPAISTLSGTISTDD.

The protein localises to the cytoplasm. The protein is Antigenic heat-stable 120 kDa protein (sca4) of Rickettsia akari.